The chain runs to 406 residues: Cysteine desulfurase (406 aa).

N6-(pyridoxal phosphate)lysine is present on Lys-226. The Cysteine persulfide intermediate role is filled by Cys-364.

This sequence belongs to the class-V pyridoxal-phosphate-dependent aminotransferase family. Csd subfamily. Homodimer. Interacts with SufE and the SufBCD complex composed of SufB, SufC and SufD. The interaction with SufE is required to mediate the direct transfer of the sulfur atom from the S-sulfanylcysteine. Pyridoxal 5'-phosphate is required as a cofactor.

It is found in the cytoplasm. It carries out the reaction (sulfur carrier)-H + L-cysteine = (sulfur carrier)-SH + L-alanine. It catalyses the reaction L-selenocysteine + AH2 = hydrogenselenide + L-alanine + A + H(+). The protein operates within cofactor biosynthesis; iron-sulfur cluster biosynthesis. Its function is as follows. Cysteine desulfurases mobilize the sulfur from L-cysteine to yield L-alanine, an essential step in sulfur metabolism for biosynthesis of a variety of sulfur-containing biomolecules. Component of the suf operon, which is activated and required under specific conditions such as oxidative stress and iron limitation. Acts as a potent selenocysteine lyase in vitro, that mobilizes selenium from L-selenocysteine. Selenocysteine lyase activity is however unsure in vivo. In Salmonella agona (strain SL483), this protein is Cysteine desulfurase.